Consider the following 232-residue polypeptide: Large ribosomal subunit protein uL1 (232 aa).

This sequence belongs to the universal ribosomal protein uL1 family. Part of the 50S ribosomal subunit.

Its function is as follows. Binds directly to 23S rRNA. The L1 stalk is quite mobile in the ribosome, and is involved in E site tRNA release. Functionally, protein L1 is also a translational repressor protein, it controls the translation of the L11 operon by binding to its mRNA. The polypeptide is Large ribosomal subunit protein uL1 (Ruegeria pomeroyi (strain ATCC 700808 / DSM 15171 / DSS-3) (Silicibacter pomeroyi)).